Here is a 430-residue protein sequence, read N- to C-terminus: Tol-Pal system protein TolB (430 aa).

An N-terminal signal peptide occupies residues 1 to 21 (MKQAFRVALGFLVLWASVLHA).

The protein belongs to the TolB family. As to quaternary structure, the Tol-Pal system is composed of five core proteins: the inner membrane proteins TolA, TolQ and TolR, the periplasmic protein TolB and the outer membrane protein Pal. They form a network linking the inner and outer membranes and the peptidoglycan layer.

Its subcellular location is the periplasm. Functionally, part of the Tol-Pal system, which plays a role in outer membrane invagination during cell division and is important for maintaining outer membrane integrity. TolB occupies a key intermediary position in the Tol-Pal system because it communicates directly with both membrane-embedded components, Pal in the outer membrane and TolA in the inner membrane. The chain is Tol-Pal system protein TolB from Yersinia enterocolitica serotype O:8 / biotype 1B (strain NCTC 13174 / 8081).